The primary structure comprises 449 residues: Glucose-6-phosphate isomerase 1 (449 aa).

Phosphothreonine is present on T38. The active-site Proton donor is the E290. Residues H311 and K425 contribute to the active site.

It belongs to the GPI family. In terms of assembly, homodimer.

The protein localises to the cytoplasm. The enzyme catalyses alpha-D-glucose 6-phosphate = beta-D-fructose 6-phosphate. It participates in carbohydrate biosynthesis; gluconeogenesis. The protein operates within carbohydrate degradation; glycolysis; D-glyceraldehyde 3-phosphate and glycerone phosphate from D-glucose: step 2/4. Its function is as follows. Catalyzes the reversible isomerization of glucose-6-phosphate to fructose-6-phosphate. This is Glucose-6-phosphate isomerase 1 from Geobacillus stearothermophilus (Bacillus stearothermophilus).